Consider the following 275-residue polypeptide: Dermonecrotic toxin SpeSicTox-betaIIA2i (275 aa).

Residue His5 is part of the active site. 2 residues coordinate Mg(2+): Glu25 and Asp27. His41 functions as the Nucleophile in the catalytic mechanism. 2 cysteine pairs are disulfide-bonded: Cys45–Cys51 and Cys47–Cys190. Asp85 provides a ligand contact to Mg(2+).

This sequence belongs to the arthropod phospholipase D family. Class II subfamily. The cofactor is Mg(2+). In terms of tissue distribution, expressed by the venom gland.

The protein localises to the secreted. It carries out the reaction an N-(acyl)-sphingosylphosphocholine = an N-(acyl)-sphingosyl-1,3-cyclic phosphate + choline. The catalysed reaction is an N-(acyl)-sphingosylphosphoethanolamine = an N-(acyl)-sphingosyl-1,3-cyclic phosphate + ethanolamine. The enzyme catalyses a 1-acyl-sn-glycero-3-phosphocholine = a 1-acyl-sn-glycero-2,3-cyclic phosphate + choline. It catalyses the reaction a 1-acyl-sn-glycero-3-phosphoethanolamine = a 1-acyl-sn-glycero-2,3-cyclic phosphate + ethanolamine. In terms of biological role, dermonecrotic toxins cleave the phosphodiester linkage between the phosphate and headgroup of certain phospholipids (sphingolipid and lysolipid substrates), forming an alcohol (often choline) and a cyclic phosphate. This toxin acts on sphingomyelin (SM). It may also act on ceramide phosphoethanolamine (CPE), lysophosphatidylcholine (LPC) and lysophosphatidylethanolamine (LPE), but not on lysophosphatidylserine (LPS), and lysophosphatidylglycerol (LPG). It acts by transphosphatidylation, releasing exclusively cyclic phosphate products as second products. Induces dermonecrosis, hemolysis, increased vascular permeability, edema, inflammatory response, and platelet aggregation. The sequence is that of Dermonecrotic toxin SpeSicTox-betaIIA2i from Sicarius peruensis (Six-eyed sand spider).